The chain runs to 139 residues: Putative pre-16S rRNA nuclease (139 aa).

This sequence belongs to the YqgF nuclease family.

The protein resides in the cytoplasm. Could be a nuclease involved in processing of the 5'-end of pre-16S rRNA. This chain is Putative pre-16S rRNA nuclease, found in Streptococcus agalactiae serotype Ia (strain ATCC 27591 / A909 / CDC SS700).